We begin with the raw amino-acid sequence, 460 residues long: Rab-3A-interacting protein (460 aa).

6 positions are modified to phosphoserine: S147, S149, S247, S250, S272, and S280. Residues 149–244 (SVLEVREKGY…EVAALKTLVL (96 aa)) adopt a coiled-coil conformation. Positions 246–280 (SSPTSPTQEPLAAGKTPFKRGHTRNKSTSSAMSGS) are disordered. Residues 271–280 (KSTSSAMSGS) show a composition bias toward polar residues.

The protein belongs to the SEC2 family. Homodimer. Interacts with the N-terminal region of SSX2. Interacts with the GDP-bound forms of RAB8A and RAB8B. The interaction with RAB8A is prevented by phosphorylation of RAB8A at 'Thr-72'. Interacts with the GDP-bound forms of RAB3A and RAB3D. Interacts with DCDC1. Interacts (via the N-terminal region) with TRAPPC14; this interaction mediates RAB3IP association with the TRAPP II complex. Forms a heterotetramer with RAB11A where RAB3IP homodimer binds two RAB11A subunits. Forms a complex with RAB11A and RAB11FIP3, probably a heterohexamer with two of each protein subunit, where Rabin8/RAB3IP and RAB11FIP3 simultaneously bind to RAB11A; the complex promotes preciliary trafficking. Forms a complex containing RAB11A, ASAP1, RAB3IP, RAP11FIP3 and ARF4; the complex promotes preciliary trafficking; the complex binds to RHO in photoreceptor cells and promotes RHO ciliary transport. As to expression, ubiquitously expressed. Expressed at highest level in testis.

Its subcellular location is the cytoplasm. The protein localises to the nucleus. It is found in the cytoskeleton. The protein resides in the cell projection. It localises to the lamellipodium. Guanine nucleotide exchange factor (GEF) which may activate RAB8A and RAB8B. Promotes the exchange of GDP to GTP, converting inactive GDP-bound Rab proteins into their active GTP-bound form. Mediates the release of GDP from RAB8A and RAB8B but not from RAB3A or RAB5. Modulates actin organization and promotes polarized transport of RAB8A-specific vesicles to the cell surface. Together with RAB11A, RAB8A, the exocyst complex, PARD3, PRKCI, ANXA2, CDC42 and DNMBP promotes transcytosis of PODXL to the apical membrane initiation sites (AMIS), apical surface formation and lumenogenesis. Together with RAB11A and FIP3/RAB11FIP3, parts of the ciliary targeting complex that promotes preciliary vesicle trafficking to mother centriole and ciliogenesis initiation. Part of the ciliary targeting complex containing Rab11, ASAP1, RAB3IP and RAB11FIP3 and ARF4 that promotes RAB3IP preciliary vesicle trafficking to mother centriole and ciliogenesis initiation. The chain is Rab-3A-interacting protein (Rab3ip) from Rattus norvegicus (Rat).